The sequence spans 353 residues: Phospho-N-acetylmuramoyl-pentapeptide-transferase (353 aa).

A run of 10 helical transmembrane segments spans residues Leu24–Ala44, Thr66–Ala86, Leu88–Phe108, Phe129–Asp149, Pro160–Thr180, Gly192–Ala212, Val229–Tyr249, Val256–Val276, Ile281–Val301, and Lys330–Leu350.

The protein belongs to the glycosyltransferase 4 family. MraY subfamily. The cofactor is Mg(2+).

Its subcellular location is the cell inner membrane. The catalysed reaction is UDP-N-acetyl-alpha-D-muramoyl-L-alanyl-gamma-D-glutamyl-meso-2,6-diaminopimeloyl-D-alanyl-D-alanine + di-trans,octa-cis-undecaprenyl phosphate = di-trans,octa-cis-undecaprenyl diphospho-N-acetyl-alpha-D-muramoyl-L-alanyl-D-glutamyl-meso-2,6-diaminopimeloyl-D-alanyl-D-alanine + UMP. Its pathway is cell wall biogenesis; peptidoglycan biosynthesis. Catalyzes the initial step of the lipid cycle reactions in the biosynthesis of the cell wall peptidoglycan: transfers peptidoglycan precursor phospho-MurNAc-pentapeptide from UDP-MurNAc-pentapeptide onto the lipid carrier undecaprenyl phosphate, yielding undecaprenyl-pyrophosphoryl-MurNAc-pentapeptide, known as lipid I. The sequence is that of Phospho-N-acetylmuramoyl-pentapeptide-transferase from Helicobacter pylori (strain HPAG1).